The chain runs to 443 residues: Phosphoglucosamine mutase (443 aa).

Catalysis depends on Ser101, which acts as the Phosphoserine intermediate. Mg(2+) contacts are provided by Ser101, Asp239, Asp241, and Asp243. A Phosphoserine modification is found at Ser101.

The protein belongs to the phosphohexose mutase family. Mg(2+) is required as a cofactor. Post-translationally, activated by phosphorylation.

The enzyme catalyses alpha-D-glucosamine 1-phosphate = D-glucosamine 6-phosphate. Its function is as follows. Catalyzes the conversion of glucosamine-6-phosphate to glucosamine-1-phosphate. The chain is Phosphoglucosamine mutase from Francisella philomiragia subsp. philomiragia (strain ATCC 25017 / CCUG 19701 / FSC 153 / O#319-036).